We begin with the raw amino-acid sequence, 164 residues long: Phosphopantetheine adenylyltransferase (164 aa).

Ser-9 lines the substrate pocket. Residues 9 to 10 (SF) and His-17 contribute to the ATP site. Substrate is bound by residues Lys-41, Leu-73, and Arg-87. Residues Glu-98 and 122–128 (YSFLSSS) each bind ATP.

Belongs to the bacterial CoaD family. As to quaternary structure, homohexamer. It depends on Mg(2+) as a cofactor.

It is found in the cytoplasm. The enzyme catalyses (R)-4'-phosphopantetheine + ATP + H(+) = 3'-dephospho-CoA + diphosphate. Its pathway is cofactor biosynthesis; coenzyme A biosynthesis; CoA from (R)-pantothenate: step 4/5. In terms of biological role, reversibly transfers an adenylyl group from ATP to 4'-phosphopantetheine, yielding dephospho-CoA (dPCoA) and pyrophosphate. In Thermobifida fusca (strain YX), this protein is Phosphopantetheine adenylyltransferase.